Reading from the N-terminus, the 523-residue chain is Peptide chain release factor 3 (523 aa).

The region spanning 10–277 (KKRRTFAIIS…SFVDLAPAPE (268 aa)) is the tr-type G domain. GTP-binding positions include 19-26 (SHPDAGKT), 87-91 (DTPGH), and 141-144 (NKLD).

This sequence belongs to the TRAFAC class translation factor GTPase superfamily. Classic translation factor GTPase family. PrfC subfamily.

The protein resides in the cytoplasm. In terms of biological role, increases the formation of ribosomal termination complexes and stimulates activities of RF-1 and RF-2. It binds guanine nucleotides and has strong preference for UGA stop codons. It may interact directly with the ribosome. The stimulation of RF-1 and RF-2 is significantly reduced by GTP and GDP, but not by GMP. In Lactobacillus helveticus (strain DPC 4571), this protein is Peptide chain release factor 3.